We begin with the raw amino-acid sequence, 284 residues long: Pantothenate synthetase (284 aa).

Residue 30–37 coordinates ATP; sequence MGNLHDGH. Residue His37 is the Proton donor of the active site. (R)-pantoate is bound at residue Gln61. Gln61 contributes to the beta-alanine binding site. 149-152 contacts ATP; it reads GEKD. Gln155 provides a ligand contact to (R)-pantoate. ATP-binding positions include Val178 and 186-189; that span reads LSSR.

Belongs to the pantothenate synthetase family. In terms of assembly, homodimer.

Its subcellular location is the cytoplasm. It catalyses the reaction (R)-pantoate + beta-alanine + ATP = (R)-pantothenate + AMP + diphosphate + H(+). The protein operates within cofactor biosynthesis; (R)-pantothenate biosynthesis; (R)-pantothenate from (R)-pantoate and beta-alanine: step 1/1. In terms of biological role, catalyzes the condensation of pantoate with beta-alanine in an ATP-dependent reaction via a pantoyl-adenylate intermediate. This Cronobacter sakazakii (strain ATCC BAA-894) (Enterobacter sakazakii) protein is Pantothenate synthetase.